Here is a 123-residue protein sequence, read N- to C-terminus: Large ribosomal subunit protein bL12 (123 aa).

The protein belongs to the bacterial ribosomal protein bL12 family. Homodimer. Part of the ribosomal stalk of the 50S ribosomal subunit. Forms a multimeric L10(L12)X complex, where L10 forms an elongated spine to which 2 to 4 L12 dimers bind in a sequential fashion. Binds GTP-bound translation factors.

Its function is as follows. Forms part of the ribosomal stalk which helps the ribosome interact with GTP-bound translation factors. Is thus essential for accurate translation. This is Large ribosomal subunit protein bL12 from Wigglesworthia glossinidia brevipalpis.